The chain runs to 109 residues: MEQFECINVEEAHQKLHQQTAVLVDIRDPQSYAMGHTPGAFHLTNDTLGAFMRDNDFDTAVMVMCYHGNSSKGAAQYLLQQGFDKVYSVDGGFDAWHRHFPAEVARGTF.

The region spanning 17–105 (HQQTAVLVDI…WHRHFPAEVA (89 aa)) is the Rhodanese domain. The active-site Cysteine persulfide intermediate is cysteine 65.

Belongs to the GlpE family.

It localises to the cytoplasm. The catalysed reaction is thiosulfate + hydrogen cyanide = thiocyanate + sulfite + 2 H(+). It catalyses the reaction thiosulfate + [thioredoxin]-dithiol = [thioredoxin]-disulfide + hydrogen sulfide + sulfite + 2 H(+). Functionally, transferase that catalyzes the transfer of sulfur from thiosulfate to thiophilic acceptors such as cyanide or dithiols. May function in a CysM-independent thiosulfate assimilation pathway by catalyzing the conversion of thiosulfate to sulfite, which can then be used for L-cysteine biosynthesis. The polypeptide is Thiosulfate sulfurtransferase GlpE (Klebsiella pneumoniae subsp. pneumoniae (strain ATCC 700721 / MGH 78578)).